The following is a 242-amino-acid chain: MDKKETHLIGHLEELRRRIIVTLAAFFLFLITAFLFVQDIYDWLIRDLDGKLAVLGPSEILWVYMMLSGICAIAASIPVAAYQLWRFVAPALTKTERKVTLMYIPGLFALFLAGISFGYFVLFPIVLSFLTHLSSGHFETMFTADRYFRFMVNLSLPFGFLFEMPLVVMFLTRLGILNPYRLAKARKLSYFLLIVVSILITPPDFISDFLVMIPLLVLFEVSVTLSAFVYKKRMREETAAAA.

3 helical membrane passes run isoleucine 19–aspartate 39, isoleucine 60–alanine 80, and leucine 107–leucine 127. The tract at residues serine 128–arginine 149 is interaction with TatAd. Residues phenylalanine 150–phenylalanine 170 form a helical membrane-spanning segment. An interaction with TatAd region spans residues leucine 171–lysine 187. Transmembrane regions (helical) follow at residues leucine 188–aspartate 208 and phenylalanine 209–valine 229.

This sequence belongs to the TatC family. Forms a complex with TatAd. Two types of complexes exist: one composed of TatAd and TatCd, and another composed only of TatAd.

It localises to the cell membrane. Part of the twin-arginine translocation (Tat) system that transports large folded proteins containing a characteristic twin-arginine motif in their signal peptide across membranes. Required for PhoD secretion. TatCd promotes membrane localization of TatAd via domain specific interactions. TatCd is required for stabile production of TatAd as well as for its maintenance. In Bacillus subtilis (strain 168), this protein is Sec-independent protein translocase protein TatCd.